The primary structure comprises 308 residues: Phosphatidate cytidylyltransferase (308 aa).

8 helical membrane-spanning segments follow: residues Phe30–Ile50, Pro73–Ile93, Pro100–Phe120, Ile127–Ile147, Ile167–Phe187, Thr205–Leu225, Phe235–Gly255, and Met280–Ile300.

This sequence belongs to the CDS family.

Its subcellular location is the cell membrane. It carries out the reaction a 1,2-diacyl-sn-glycero-3-phosphate + CTP + H(+) = a CDP-1,2-diacyl-sn-glycerol + diphosphate. Its pathway is phospholipid metabolism; CDP-diacylglycerol biosynthesis; CDP-diacylglycerol from sn-glycerol 3-phosphate: step 3/3. This chain is Phosphatidate cytidylyltransferase (cdsA), found in Chlamydia pneumoniae (Chlamydophila pneumoniae).